The following is a 132-amino-acid chain: Small ribosomal subunit protein uS8 (132 aa).

This sequence belongs to the universal ribosomal protein uS8 family. Part of the 30S ribosomal subunit. Contacts proteins S5 and S12.

In terms of biological role, one of the primary rRNA binding proteins, it binds directly to 16S rRNA central domain where it helps coordinate assembly of the platform of the 30S subunit. The protein is Small ribosomal subunit protein uS8 of Pseudarthrobacter chlorophenolicus (strain ATCC 700700 / DSM 12829 / CIP 107037 / JCM 12360 / KCTC 9906 / NCIMB 13794 / A6) (Arthrobacter chlorophenolicus).